Here is a 336-residue protein sequence, read N- to C-terminus: DNA-directed RNA polymerase subunit alpha (336 aa).

An alpha N-terminal domain (alpha-NTD) region spans residues 1–232; that stretch reads MIQKNWQELI…DQLGVFVNFD (232 aa). An alpha C-terminal domain (alpha-CTD) region spans residues 248-336; it reads FNPALLKKVD…DLAKRYEDQY (89 aa).

This sequence belongs to the RNA polymerase alpha chain family. As to quaternary structure, homodimer. The RNAP catalytic core consists of 2 alpha, 1 beta, 1 beta' and 1 omega subunit. When a sigma factor is associated with the core the holoenzyme is formed, which can initiate transcription.

The enzyme catalyses RNA(n) + a ribonucleoside 5'-triphosphate = RNA(n+1) + diphosphate. DNA-dependent RNA polymerase catalyzes the transcription of DNA into RNA using the four ribonucleoside triphosphates as substrates. The sequence is that of DNA-directed RNA polymerase subunit alpha from Rhizobium rhizogenes (strain K84 / ATCC BAA-868) (Agrobacterium radiobacter).